The primary structure comprises 220 residues: Claudin-3 (220 aa).

Over Met1–Thr8 the chain is Cytoplasmic. Residues Gly9–Trp29 form a helical membrane-spanning segment. Topologically, residues Arg30 to Arg80 are extracellular. Residues Ala81 to Ala101 form a helical membrane-spanning segment. Topologically, residues Gln102–Lys115 are cytoplasmic. A helical transmembrane segment spans residues Ile116–Ser136. Over Trp137–Met159 the chain is Extracellular. The helical transmembrane segment at Gly160–Leu180 threads the bilayer. Over Cys181–Val220 the chain is Cytoplasmic. Tyr198 carries the phosphotyrosine modification. 2 positions are modified to phosphoserine: Ser199 and Ser209. Residues Tyr219–Val220 are interactions with TJP1, TJP2 and TJP3.

It belongs to the claudin family. In terms of assembly, can form homo- and heteropolymers with other CLDN. Homopolymers interact with CLDN1 and CLDN2 homopolymers. Interacts in cis (within the same plasma membrane) with CLDN19. Directly interacts with TJP1/ZO-1, TJP2/ZO-2 and TJP3/ZO-3.

It is found in the cell junction. It localises to the tight junction. The protein resides in the cell membrane. In terms of biological role, barrier-forming claudin. Plays a major role in tight junction-specific obliteration of the intercellular space, through calcium-independent cell-adhesion activity. This chain is Claudin-3 (CLDN3), found in Homo sapiens (Human).